The following is a 750-amino-acid chain: Neprilysin (750 aa).

The segment covering 1-14 has biased composition (polar residues); it reads MGKSESQMDITDIN. The tract at residues 1 to 20 is disordered; it reads MGKSESQMDITDINTPKPKK. G2 carries the N-myristoyl glycine lipid modification. At 2–28 the chain is on the cytoplasmic side; the sequence is GKSESQMDITDINTPKPKKKQRWTPLE. Residues S4 and S6 each carry the phosphoserine modification. Positions 16 to 23 match the Stop-transfer sequence motif; it reads PKPKKKQR. A helical; Signal-anchor for type II membrane protein membrane pass occupies residues 29–51; sequence ISLSVLVLLLTIIAVTMIALYAT. Residues 52–750 are Extracellular-facing; that stretch reads YDDGICKSSD…MNPEKKCRVW (699 aa). Residues 56–750 enclose the Peptidase M13 domain; that stretch reads ICKSSDCIKS…MNPEKKCRVW (695 aa). 6 disulfides stabilise this stretch: C57-C62, C80-C735, C88-C695, C143-C411, C234-C242, and C621-C747. R103 is an a peptide binding site. An N-linked (GlcNAc...) asparagine glycan is attached at N145. N-linked (GlcNAc...) asparagine glycosylation is found at N285, N311, N325, and N335. A Zn(2+)-binding site is contributed by H584. Residue E585 is part of the active site. H588 provides a ligand contact to Zn(2+). N-linked (GlcNAc...) asparagine glycosylation occurs at N628. E647 is a binding site for Zn(2+). The active-site Proton donor is the D651.

Belongs to the peptidase M13 family. It depends on Zn(2+) as a cofactor. Myristoylation is a determinant of membrane targeting. In terms of processing, glycosylation at Asn-628 is necessary both for surface expression and neutral endopeptidase activity.

Its subcellular location is the cell membrane. The enzyme catalyses Preferential cleavage of polypeptides between hydrophobic residues, particularly with Phe or Tyr at P1'.. It carries out the reaction substance P + H2O = substance P(1-9) + L-Leu-L-Met-NH2. It catalyses the reaction substance P + H2O = substance P(1-7) + L-Phe-Gly-L-Leu-L-Met-NH2. The catalysed reaction is neurotensin + H2O = neurotensin(1-11) + L-isoleucyl-L-leucine. The enzyme catalyses neurotensin + H2O = neurotensin(1-10) + L-tyrosyl-L-isoleucyl-L-leucine. Thermolysin-like specificity, but is almost confined on acting on polypeptides of up to 30 amino acids. Biologically important in the destruction of opioid peptides such as Met- and Leu-enkephalins by cleavage of a Gly-Phe bond. Catalyzes cleavage of bradykinin, substance P and neurotensin peptides. Able to cleave angiotensin-1, angiotensin-2 and angiotensin 1-9. Involved in the degradation of atrial natriuretic factor (ANF) and brain natriuretic factor (BNP(1-32)). Displays UV-inducible elastase activity toward skin preelastic and elastic fibers. The sequence is that of Neprilysin (MME) from Pongo abelii (Sumatran orangutan).